Consider the following 148-residue polypeptide: Lysozyme-like protein 6 (148 aa).

The signal sequence occupies residues 1-19 (MLKALFICVASCLLVVNDG). One can recognise a C-type lysozyme domain in the interval 20–148 (NIIHRCSLAK…SYWMTGCHLG (129 aa)). 4 cysteine pairs are disulfide-bonded: C25-C145, C49-C133, C83-C98, and C94-C112. E54 is an active-site residue. Residue N58 is glycosylated (N-linked (GlcNAc...) asparagine). Residue D71 is part of the active site.

Belongs to the glycosyl hydrolase 22 family. In terms of assembly, monomer. Expressed strongly in testis and epididymis and weakly in seminal vesicle, vas deferens, kidney and spleen. Highly expressed in primary spermatocytes and round spermatids (at protein level).

The protein resides in the secreted. The protein localises to the cell surface. It localises to the cell projection. It is found in the cilium. Its subcellular location is the flagellum. The catalysed reaction is Hydrolysis of (1-&gt;4)-beta-linkages between N-acetylmuramic acid and N-acetyl-D-glucosamine residues in a peptidoglycan and between N-acetyl-D-glucosamine residues in chitodextrins.. May be involved sperm-egg plasma membrane adhesion and fusion during fertilization. Exhibits bacteriolytic activity in vitro against Micrococcus luteus and Staphylococcus aureus. Shows weak bacteriolytic activity against Gram-positive bacteria at physiological pH. Bacteriolytic activity is pH-dependent, with a maximum at around pH 5.6. This is Lysozyme-like protein 6 (Lyzl6) from Mus musculus (Mouse).